The following is a 434-amino-acid chain: 3-phosphoshikimate 1-carboxyvinyltransferase (434 aa).

3 residues coordinate 3-phosphoshikimate: Lys-22, Ser-23, and Arg-27. Lys-22 contacts phosphoenolpyruvate. Phosphoenolpyruvate-binding residues include Gly-93 and Arg-121. Residues Ser-168, Ser-169, Gln-170, Ser-199, Asp-320, and Lys-347 each coordinate 3-phosphoshikimate. Phosphoenolpyruvate is bound at residue Gln-170. Residue Asp-320 is the Proton acceptor of the active site. Positions 351, 394, and 419 each coordinate phosphoenolpyruvate.

This sequence belongs to the EPSP synthase family. Monomer.

It localises to the cytoplasm. The catalysed reaction is 3-phosphoshikimate + phosphoenolpyruvate = 5-O-(1-carboxyvinyl)-3-phosphoshikimate + phosphate. It participates in metabolic intermediate biosynthesis; chorismate biosynthesis; chorismate from D-erythrose 4-phosphate and phosphoenolpyruvate: step 6/7. Functionally, catalyzes the transfer of the enolpyruvyl moiety of phosphoenolpyruvate (PEP) to the 5-hydroxyl of shikimate-3-phosphate (S3P) to produce enolpyruvyl shikimate-3-phosphate and inorganic phosphate. This chain is 3-phosphoshikimate 1-carboxyvinyltransferase, found in Paraburkholderia phymatum (strain DSM 17167 / CIP 108236 / LMG 21445 / STM815) (Burkholderia phymatum).